We begin with the raw amino-acid sequence, 480 residues long: MTSPMTSKDSKLTLAEKVWRDHVVSQGEGDQPDLIFIDLQLLHEVTSPQAFDGLRMAGRTLRHPELHLATEDHNVPTEGIHNGSLLEINDLVSRTQVETLRKNCEEFGVRLHAMGDKKQGIVHQVGPQLGATQPGMTIVCGDSHTSTHGAFGAMAFGIGTSEVEHVMATQTLSLKPFKTMAINVTGELQPGVTAKDLILAVIATIGTGGGQGHVIEYRGEAIEKLSMEARMTVCNMSIEAGARAGMIAPDETTFDYIKGREMAPTGQDWDDAVAYWKTLPTDEGAEFDTEITIDGSAITPFITWGTNPGQGLPLSSVVPSPEDFPGDNEKVAAEKALAYMGLTPGTPLRDIAIDTVFLGSCTNARMDDLRIAADILRGRSIADSVRMMVVPSSTMIKEQAEAEGLDKIFIEAGAQWRTAGCSMCLGMNPDQLTPGERCASTSNRNFEGRQGPGGRTHLVSPAVAAATAIKGTLASPADLD.

Cys361, Cys421, and Cys424 together coordinate [4Fe-4S] cluster.

It belongs to the aconitase/IPM isomerase family. LeuC type 1 subfamily. Heterodimer of LeuC and LeuD. The cofactor is [4Fe-4S] cluster.

The enzyme catalyses (2R,3S)-3-isopropylmalate = (2S)-2-isopropylmalate. Its pathway is amino-acid biosynthesis; L-leucine biosynthesis; L-leucine from 3-methyl-2-oxobutanoate: step 2/4. Its function is as follows. Catalyzes the isomerization between 2-isopropylmalate and 3-isopropylmalate, via the formation of 2-isopropylmaleate. In Corynebacterium diphtheriae (strain ATCC 700971 / NCTC 13129 / Biotype gravis), this protein is 3-isopropylmalate dehydratase large subunit.